Reading from the N-terminus, the 285-residue chain is Catechol-2,3-dioxygenase (285 aa).

2 VOC domains span residues 9–126 and 169–285; these read HIGY…MYAD and IIGH…TFVI. His213 and Glu264 together coordinate Fe cation.

Belongs to the extradiol ring-cleavage dioxygenase family. Requires Fe(2+) as cofactor.

It catalyses the reaction catechol + O2 = (2Z,4E)-2-hydroxy-6-oxohexa-2,4-dienoate + H(+). Involved in the meta cleavage of catechol to 2-hydroxymuconic semialdehyde. Essential for growth and viability in the presence of catechol and probably involved in the detoxification of catechol. The sequence is that of Catechol-2,3-dioxygenase (catE) from Bacillus subtilis (strain 168).